The following is a 240-amino-acid chain: Aldehyde dehydrogenase, cytosolic 2 (240 aa).

Active-site residues include Glu-8 and Cys-42. N6-acetyllysine is present on residues Lys-106, Lys-149, Lys-151, and Lys-174.

This sequence belongs to the aldehyde dehydrogenase family. Homotetramer. Non-lens specific, predominant form expressed in the liver.

Its subcellular location is the cytoplasm. It carries out the reaction an aldehyde + NAD(+) + H2O = a carboxylate + NADH + 2 H(+). It participates in alcohol metabolism; ethanol degradation; acetate from ethanol: step 2/2. Its function is as follows. Elephant shrews, in contrast to other mammals, possess both a lens- and a non-lens specific class-1 aldehyde dehydrogenase. Can convert/oxidize retinaldehyde to retinoic acid. The polypeptide is Aldehyde dehydrogenase, cytosolic 2 (Macroscelides proboscideus (Short-eared elephant shrew)).